The chain runs to 347 residues: UPF0284 protein M164_0030 (347 aa).

Belongs to the UPF0284 family.

The chain is UPF0284 protein M164_0030 from Saccharolobus islandicus (strain M.16.4 / Kamchatka #3) (Sulfolobus islandicus).